The following is a 330-amino-acid chain: ADP-L-glycero-D-manno-heptose-6-epimerase (330 aa).

NADP(+) is bound by residues 11–12, 32–33, K39, K54, 75–79, and N92; these read FI, DN, and EGACS. Catalysis depends on Y139, which acts as the Proton acceptor. Residue K143 coordinates NADP(+). N168 serves as a coordination point for substrate. 2 residues coordinate NADP(+): V169 and K177. The active-site Proton acceptor is the K177. Residues R179, H186, 200 to 203, R213, and Y292 each bind substrate; that span reads FGEY.

This sequence belongs to the NAD(P)-dependent epimerase/dehydratase family. HldD subfamily. In terms of assembly, homopentamer. The cofactor is NADP(+).

The catalysed reaction is ADP-D-glycero-beta-D-manno-heptose = ADP-L-glycero-beta-D-manno-heptose. The protein operates within nucleotide-sugar biosynthesis; ADP-L-glycero-beta-D-manno-heptose biosynthesis; ADP-L-glycero-beta-D-manno-heptose from D-glycero-beta-D-manno-heptose 7-phosphate: step 4/4. Catalyzes the interconversion between ADP-D-glycero-beta-D-manno-heptose and ADP-L-glycero-beta-D-manno-heptose via an epimerization at carbon 6 of the heptose. The polypeptide is ADP-L-glycero-D-manno-heptose-6-epimerase (Paraburkholderia xenovorans (strain LB400)).